The following is a 100-amino-acid chain: Urease subunit gamma (100 aa).

The protein belongs to the urease gamma subunit family. As to quaternary structure, heterotrimer of UreA (gamma), UreB (beta) and UreC (alpha) subunits. Three heterotrimers associate to form the active enzyme.

The protein localises to the cytoplasm. It catalyses the reaction urea + 2 H2O + H(+) = hydrogencarbonate + 2 NH4(+). It functions in the pathway nitrogen metabolism; urea degradation; CO(2) and NH(3) from urea (urease route): step 1/1. This is Urease subunit gamma from Rhodopseudomonas palustris (strain ATCC BAA-98 / CGA009).